A 625-amino-acid polypeptide reads, in one-letter code: Probable potassium transport system protein Kup (625 aa).

12 helical membrane passes run 13 to 33 (TALA…LYAL), 53 to 73 (ILSI…VAIV), 103 to 123 (IYMI…GIIT), 141 to 161 (VFDP…FLVQ), 172 to 192 (FGPI…HSVI), 206 to 226 (AIQF…AVVL), 250 to 270 (WFFV…ALLL), 282 to 302 (LLVP…ATVI), 340 to 360 (IYVP…ILIF), 369 to 389 (AYGL…AVFI), 400 to 420 (VLIL…ATSL), and 422 to 442 (ILSG…ILMT).

It belongs to the HAK/KUP transporter (TC 2.A.72) family.

Its subcellular location is the cell inner membrane. It carries out the reaction K(+)(in) + H(+)(in) = K(+)(out) + H(+)(out). Its function is as follows. Transport of potassium into the cell. Likely operates as a K(+):H(+) symporter. This is Probable potassium transport system protein Kup from Acinetobacter baumannii (strain SDF).